Reading from the N-terminus, the 243-residue chain is 1-(5-phosphoribosyl)-5-[(5-phosphoribosylamino)methylideneamino] imidazole-4-carboxamide isomerase (243 aa).

Catalysis depends on Asp-8, which acts as the Proton acceptor. Catalysis depends on Asp-130, which acts as the Proton donor.

This sequence belongs to the HisA/HisF family.

Its subcellular location is the cytoplasm. The catalysed reaction is 1-(5-phospho-beta-D-ribosyl)-5-[(5-phospho-beta-D-ribosylamino)methylideneamino]imidazole-4-carboxamide = 5-[(5-phospho-1-deoxy-D-ribulos-1-ylimino)methylamino]-1-(5-phospho-beta-D-ribosyl)imidazole-4-carboxamide. The protein operates within amino-acid biosynthesis; L-histidine biosynthesis; L-histidine from 5-phospho-alpha-D-ribose 1-diphosphate: step 4/9. This is 1-(5-phosphoribosyl)-5-[(5-phosphoribosylamino)methylideneamino] imidazole-4-carboxamide isomerase from Saccharophagus degradans (strain 2-40 / ATCC 43961 / DSM 17024).